Here is a 203-residue protein sequence, read N- to C-terminus: Thymidine kinase (203 aa).

ATP contacts are provided by residues 21-28 and 99-102; these read GCMFAGKT and DEIQ. The Proton acceptor role is filled by Glu-100. Residues Cys-156, Cys-159, Cys-194, and Cys-197 each contribute to the Zn(2+) site.

This sequence belongs to the thymidine kinase family. In terms of assembly, homotetramer.

Its subcellular location is the cytoplasm. It catalyses the reaction thymidine + ATP = dTMP + ADP + H(+). The sequence is that of Thymidine kinase from Mesoplasma florum (strain ATCC 33453 / NBRC 100688 / NCTC 11704 / L1) (Acholeplasma florum).